Here is a 273-residue protein sequence, read N- to C-terminus: Dermonecrotic toxin LapSicTox-alphaIB1c (273 aa).

His5 is a catalytic residue. Positions 25 and 27 each coordinate Mg(2+). Catalysis depends on His41, which acts as the Nucleophile. 2 cysteine pairs are disulfide-bonded: Cys45/Cys51 and Cys47/Cys190. Mg(2+) is bound at residue Asp85. N-linked (GlcNAc...) asparagine glycosylation is present at Asn250.

It belongs to the arthropod phospholipase D family. Class II subfamily. Mg(2+) serves as cofactor. In terms of tissue distribution, expressed by the venom gland.

The protein resides in the secreted. It catalyses the reaction an N-(acyl)-sphingosylphosphocholine = an N-(acyl)-sphingosyl-1,3-cyclic phosphate + choline. The enzyme catalyses an N-(acyl)-sphingosylphosphoethanolamine = an N-(acyl)-sphingosyl-1,3-cyclic phosphate + ethanolamine. The catalysed reaction is a 1-acyl-sn-glycero-3-phosphocholine = a 1-acyl-sn-glycero-2,3-cyclic phosphate + choline. It carries out the reaction a 1-acyl-sn-glycero-3-phosphoethanolamine = a 1-acyl-sn-glycero-2,3-cyclic phosphate + ethanolamine. In terms of biological role, dermonecrotic toxins cleave the phosphodiester linkage between the phosphate and headgroup of certain phospholipids (sphingolipid and lysolipid substrates), forming an alcohol (often choline) and a cyclic phosphate. This toxin acts on sphingomyelin (SM). It may also act on ceramide phosphoethanolamine (CPE), lysophosphatidylcholine (LPC) and lysophosphatidylethanolamine (LPE), but not on lysophosphatidylserine (LPS), and lysophosphatidylglycerol (LPG). It acts by transphosphatidylation, releasing exclusively cyclic phosphate products as second products. Induces dermonecrosis, hemolysis, increased vascular permeability, edema, inflammatory response, and platelet aggregation. The sequence is that of Dermonecrotic toxin LapSicTox-alphaIB1c from Loxosceles apachea (Apache recluse spider).